Reading from the N-terminus, the 677-residue chain is Membrane-associated tyrosine- and threonine-specific cdc2-inhibitory kinase wee-1.3 (677 aa).

The segment covering 1–22 has biased composition (polar residues); that stretch reads MDDTEGNSSMDSIRNGQSSPLP. Residues 1–30 are disordered; it reads MDDTEGNSSMDSIRNGQSSPLPQVTPRLPQ. The Protein kinase domain occupies 108-355; the sequence is FQIDEIIGRG…SRDLLDHPVI (248 aa). Residues 114 to 122 and Lys-137 each bind ATP; that span reads IGRGSFGEV. The active-site Proton acceptor is the Asp-228. Mg(2+)-binding residues include Asn-233 and Asp-246. Disordered stretches follow at residues 478 to 526 and 632 to 677; these read FDND…GTPR and EPSN…GDEV. Positions 489–499 are enriched in polar residues; it reads ATCSSSNSSAI. The segment covering 638–652 has biased composition (basic and acidic residues); sequence TVDHHTILEQSESPR.

The protein belongs to the protein kinase superfamily. Ser/Thr protein kinase family. WEE1 subfamily.

It is found in the golgi apparatus membrane. It localises to the cytoplasm. The catalysed reaction is L-seryl-[protein] + ATP = O-phospho-L-seryl-[protein] + ADP + H(+). It catalyses the reaction L-threonyl-[protein] + ATP = O-phospho-L-threonyl-[protein] + ADP + H(+). Its function is as follows. Acts as a negative regulator of entry into mitosis (G2 to M transition) by phosphorylation of the CDK1 kinase during oocyte maturation. Required for oocyte maturation, embryonic development, germline proliferation and initiation of meiosis during spermatogenesis. Required for chromosome structure during mitosis and negative regulation of nuclear envelope breakdown. The protein is Membrane-associated tyrosine- and threonine-specific cdc2-inhibitory kinase wee-1.3 (wee-1.3) of Caenorhabditis elegans.